Here is a 284-residue protein sequence, read N- to C-terminus: NADH-cytochrome b5 reductase 1 (284 aa).

A helical membrane pass occupies residues 8 to 28 (PFIIFATVAAIISSAVAYYFF). One can recognise an FAD-binding FR-type domain in the interval 41 to 144 (NDFQKFPLIE…RGPKGFFTYT (104 aa)). FAD is bound by residues 124–139 (ESKK…GPKG) and 150–182 (SFGM…KVSL).

Belongs to the flavoprotein pyridine nucleotide cytochrome reductase family. Monomer. Component of the 2-(3-amino-3-carboxypropyl)histidine synthase complex composed of DPH1, DPH2, DPH3 and a NADH-dependent reductase, predominantly CBR1. It depends on FAD as a cofactor.

It is found in the mitochondrion outer membrane. It catalyses the reaction 2 Fe(III)-[cytochrome b5] + NADH = 2 Fe(II)-[cytochrome b5] + NAD(+) + H(+). The enzyme catalyses 2 Fe(3+)-[Dph3] + NADH = 2 Fe(2+)-[Dph3] + NAD(+) + H(+). It participates in protein modification; peptidyl-diphthamide biosynthesis. Functionally, NADH-dependent reductase for DPH3 and cytochrome b5. Required for the first step of diphthamide biosynthesis, a post-translational modification of histidine which occurs in elongation factor 2. DPH1 and DPH2 transfer a 3-amino-3-carboxypropyl (ACP) group from S-adenosyl-L-methionine (SAM) to a histidine residue, the reaction is assisted by a reduction system comprising DPH3 and a NADH-dependent reductase, predominantly CBR1. By reducing DPH3, also involved in the formation of the tRNA wobble base modification mcm5s 2U (5-methoxycarbonylmethyl-2-thiouridine), mediated by the elongator complex. The cytochrome b5/NADH cytochrome b5 reductase electron transfer system supports the catalytic activity of several sterol biosynthetic enzymes. The polypeptide is NADH-cytochrome b5 reductase 1 (CBR1) (Debaryomyces hansenii (strain ATCC 36239 / CBS 767 / BCRC 21394 / JCM 1990 / NBRC 0083 / IGC 2968) (Yeast)).